The sequence spans 161 residues: Large-conductance mechanosensitive channel (161 aa).

2 consecutive transmembrane segments (helical) span residues 21–41 (VGVI…DGVI) and 79–99 (GAFI…FLLV). Residues 142–154 (TAAPKAAAAPVAK) show a composition bias toward low complexity. A disordered region spans residues 142-161 (TAAPKAAAAPVAKPKTKPKA).

Belongs to the MscL family. In terms of assembly, homopentamer.

It localises to the cell inner membrane. Functionally, channel that opens in response to stretch forces in the membrane lipid bilayer. May participate in the regulation of osmotic pressure changes within the cell. This chain is Large-conductance mechanosensitive channel, found in Caulobacter sp. (strain K31).